Consider the following 529-residue polypeptide: MQQRRPVRRALLSVSDKAGIIEFAQALSARGVELLSTGGTARLLAEKGLPVTEVSDYTGFPEMMDGRVKTLHPKVHGGILGRRGQDDAIMEQHHIAPIDMVVVNLYPFAETVAREGCSLEDAVENIDIGGPTMVRSAAKNHKDVAIVVKSSDYDAIIKEMDANEGSLTLDTRFDLAIKAFEHTAAYDSMIANYFGSMVPAYHGESKEAAGRFPRTLNLNFIKKQDMRYGENSHQQAAFYIEENVKEASVATATQVQGKALSYNNIADTDAALECVKEFNEPACVIVKHANPCGVAVSTSILDAYDRAYKTDPTSAFGGIIAFNRELDAETAQAIISRQFVEVIIAPSASGEALKITAAKQNVRVLTCGQWAQRVPGLDFKRVNGGLLVQDRDLGMVSEAELRVVSKRQPTEQELRDALFCWKVAKFVKSNAIVYAKENMTIGIGAGQMSRVYSAKIAGIKAADEGLEVKGSAMASDAFFPFRDGIDAAAAVGVSCVIQPGGSIRDDEVIAAADEHGIAMIFTDMRHFRH.

Residues methionine 1–valine 148 form the MGS-like domain.

Belongs to the PurH family.

It catalyses the reaction (6R)-10-formyltetrahydrofolate + 5-amino-1-(5-phospho-beta-D-ribosyl)imidazole-4-carboxamide = 5-formamido-1-(5-phospho-D-ribosyl)imidazole-4-carboxamide + (6S)-5,6,7,8-tetrahydrofolate. The enzyme catalyses IMP + H2O = 5-formamido-1-(5-phospho-D-ribosyl)imidazole-4-carboxamide. The protein operates within purine metabolism; IMP biosynthesis via de novo pathway; 5-formamido-1-(5-phospho-D-ribosyl)imidazole-4-carboxamide from 5-amino-1-(5-phospho-D-ribosyl)imidazole-4-carboxamide (10-formyl THF route): step 1/1. Its pathway is purine metabolism; IMP biosynthesis via de novo pathway; IMP from 5-formamido-1-(5-phospho-D-ribosyl)imidazole-4-carboxamide: step 1/1. The protein is Bifunctional purine biosynthesis protein PurH of Salmonella newport (strain SL254).